Reading from the N-terminus, the 544-residue chain is Chitin-inducible gibberellin-responsive protein 2 (544 aa).

The tract at residues 1 to 123 is disordered; sequence MADTPTSRMI…VGASCVTEDP (123 aa). Composition is skewed to polar residues over residues 15-30, 63-74, and 86-101; these read NIPS…SDNP, SQATPNKYTLDS, and PSSQ…PLSQ. The 380-residue stretch at 165–544 folds into the GRAS domain; it reads RMMGIPRGNL…RPLVVSSAWH (380 aa). The segment at 172-232 is leucine repeat I (LRI); that stretch reads GNLKELLIAC…VARLASSGIS (61 aa). The segment at 251-316 is VHIID; the sequence is MHFLYEACPY…GGPPTVRITG (66 aa). The VHIID motif lies at 282–286; the sequence is IHIID. Residues 332–364 are leucine repeat II (LRII); it reads LVGRRLSHIASLCKVPFEFHPLAISGSKVEAAH. Residues 373-467 form a PFYRE region; the sequence is LAVNFTLELH…QHCLAREIVN (95 aa). The segment at 470–544 is SAW; that stretch reads ACEGEERAER…RPLVVSSAWH (75 aa).

This sequence belongs to the GRAS family.

It is found in the nucleus. Its function is as follows. May play a regulatory role in the early step of oligosaccharide elicitor response, downstream of the membrane-associated high-affinity chitin-binding protein. The chain is Chitin-inducible gibberellin-responsive protein 2 (CIGR2) from Oryza sativa subsp. japonica (Rice).